The chain runs to 181 residues: Adenine phosphoribosyltransferase (181 aa).

This sequence belongs to the purine/pyrimidine phosphoribosyltransferase family. In terms of assembly, homodimer.

The protein localises to the cytoplasm. It catalyses the reaction AMP + diphosphate = 5-phospho-alpha-D-ribose 1-diphosphate + adenine. Its pathway is purine metabolism; AMP biosynthesis via salvage pathway; AMP from adenine: step 1/1. Its function is as follows. Catalyzes a salvage reaction resulting in the formation of AMP, that is energically less costly than de novo synthesis. The protein is Adenine phosphoribosyltransferase of Colwellia psychrerythraea (strain 34H / ATCC BAA-681) (Vibrio psychroerythus).